A 259-amino-acid chain; its full sequence is Putative aldolase class 2 protein PA3430 (259 aa).

Zn(2+)-binding residues include His113, His115, and His176.

Belongs to the aldolase class II family. The cofactor is Zn(2+).

The sequence is that of Putative aldolase class 2 protein PA3430 from Pseudomonas aeruginosa (strain ATCC 15692 / DSM 22644 / CIP 104116 / JCM 14847 / LMG 12228 / 1C / PRS 101 / PAO1).